Reading from the N-terminus, the 452-residue chain is Cobyrinate a,c-diamide synthase (452 aa).

The GATase cobBQ-type domain occupies 248–441; the sequence is RVAYALDAAF…LHIHFYQNLL (194 aa). Catalysis depends on Cys330, which acts as the Nucleophile.

Belongs to the CobB/CbiA family. The cofactor is Mg(2+).

It carries out the reaction cob(II)yrinate + 2 L-glutamine + 2 ATP + 2 H2O = cob(II)yrinate a,c diamide + 2 L-glutamate + 2 ADP + 2 phosphate + 2 H(+). It functions in the pathway cofactor biosynthesis; adenosylcobalamin biosynthesis; cob(II)yrinate a,c-diamide from sirohydrochlorin (anaerobic route): step 10/10. Catalyzes the ATP-dependent amidation of the two carboxylate groups at positions a and c of cobyrinate, using either L-glutamine or ammonia as the nitrogen source. This is Cobyrinate a,c-diamide synthase from Listeria monocytogenes serotype 4b (strain F2365).